Reading from the N-terminus, the 277-residue chain is Insulin-induced gene 1 protein (277 aa).

The Cytoplasmic portion of the chain corresponds to 1-84; sequence MPRLHDHFWS…PYPNTWHHRL (84 aa). A compositionally biased stretch (low complexity) spans 51-66; the sequence is HGAPDADPAPRGRSAA. The interval 51–73 is disordered; that stretch reads HGAPDADPAPRGRSAAMSGPEPG. The helical transmembrane segment at 85–107 threads the bilayer; the sequence is LQRSLVLFSVGVVLALVLNLLQI. Residues 108 to 126 are Lumenal-facing; it reads QRNVTLFPEEVIATIFSSA. Residues 127–144 form a helical membrane-spanning segment; it reads WWVPPCCGTAAAVVGLLY. Residues 145–159 are Cytoplasmic-facing; that stretch reads PCIDSHLGEPHKFKR. Glycyl lysine isopeptide (Lys-Gly) (interchain with G-Cter in ubiquitin) cross-links involve residues Lys156 and Lys158. A helical membrane pass occupies residues 160-182; it reads EWASVMRCIAVFVGINHASAKLD. Over 183–185 the chain is Lumenal; the sequence is FAN. A helical transmembrane segment spans residues 186-204; it reads NVQLSLTLAALSLGLWWTF. Over 205–209 the chain is Cytoplasmic; it reads DRSRS. Ser207 carries the post-translational modification Phosphoserine; by PCK1. The helical transmembrane segment at 210–231 threads the bilayer; that stretch reads GLGLGITIAFLATLITQFLVYN. Residues 232–245 are Lumenal-facing; it reads GVYQYTSPDFLYIR. The chain crosses the membrane as a helical span at residues 246 to 263; sequence SWLPCIFFSGGVTVGNIG. Over 264–277 the chain is Cytoplasmic; it reads RQLAMGVPEKPHSD. Positions 271-277 match the KxHxx motif; the sequence is PEKPHSD.

The protein belongs to the INSIG family. As to quaternary structure, interacts with SCAP; interaction is direct and only takes place in the presence of sterols; it prevents interaction between SCAP and the coat protein complex II (COPII). Associates with the SCAP-SREBP complex (composed of SCAP and SREBF1/SREBP1 or SREBF2/SREBP2); association is mediated via its interaction with SCAP and only takes place in the presence of sterols. Interaction with SCAP is mutually exclusive with PAQR3. Interacts with HMGCR (via its SSD); the interaction, accelerated by sterols, leads to the recruitment of HMGCR to AMFR/gp78 for its ubiquitination by the sterol-mediated ERAD pathway. Interacts with AMFR/gp78 (via its membrane domain); the interaction recruits HMCR at the ER membrane for its ubiquitination and degradation by the sterol-mediated ERAD pathway. Interacts with SOAT2/ACAT2; leading to promote recruitment of AMFR/gp78 and subsequent ubiquitination of SOAT2/ACAT2. Interacts with RNF139. Interacts with RNF145. In terms of processing, phosphorylation at Ser-207 by PCK1 reduces binding to oxysterol, disrupting the interaction between INSIG1 and SCAP, thereby promoting nuclear translocation of SREBP proteins (SREBF1/SREBP1 or SREBF2/SREBP2) and subsequent transcription of downstream lipogenesis-related genes. Post-translationally, ubiquitinated by AMFR/gp78 in response to sterol deprivation, leading to its degradation: when the SCAP-SREBP complex becomes dissociated from INSIG1, INSIG1 is then ubiquitinated and degraded in proteasomes. Although ubiquitination is required for rapid INSIG1 degradation, it is not required for release of the SCAP-SREBP complex. Ubiquitinated by RNF139. As to expression, expressed in all tissues tested with highest expression in the liver.

The protein resides in the endoplasmic reticulum membrane. Its function is as follows. Oxysterol-binding protein that mediates feedback control of cholesterol synthesis by controlling both endoplasmic reticulum to Golgi transport of SCAP and degradation of HMGCR. Acts as a negative regulator of cholesterol biosynthesis by mediating the retention of the SCAP-SREBP complex in the endoplasmic reticulum, thereby blocking the processing of sterol regulatory element-binding proteins (SREBPs) SREBF1/SREBP1 and SREBF2/SREBP2. Binds oxysterol, including 25-hydroxycholesterol, regulating interaction with SCAP and retention of the SCAP-SREBP complex in the endoplasmic reticulum. In presence of oxysterol, interacts with SCAP, retaining the SCAP-SREBP complex in the endoplasmic reticulum, thereby preventing SCAP from escorting SREBF1/SREBP1 and SREBF2/SREBP2 to the Golgi. Sterol deprivation or phosphorylation by PCK1 reduce oxysterol-binding, disrupting the interaction between INSIG1 and SCAP, thereby promoting Golgi transport of the SCAP-SREBP complex, followed by processing and nuclear translocation of SREBF1/SREBP1 and SREBF2/SREBP2. Also regulates cholesterol synthesis by regulating degradation of HMGCR: initiates the sterol-mediated ubiquitin-mediated endoplasmic reticulum-associated degradation (ERAD) of HMGCR via recruitment of the reductase to the ubiquitin ligases AMFR/gp78 and/or RNF139. Also regulates degradation of SOAT2/ACAT2 when the lipid levels are low: initiates the ubiquitin-mediated degradation of SOAT2/ACAT2 via recruitment of the ubiquitin ligases AMFR/gp78. The protein is Insulin-induced gene 1 protein of Homo sapiens (Human).